A 372-amino-acid chain; its full sequence is Delta-type opioid receptor (372 aa).

The Extracellular segment spans residues 1–47 (MEPAPSAGAELQPPLFANASDAYPSACPSAGANASGPPGARSASSLA). N-linked (GlcNAc...) asparagine glycans are attached at residues asparagine 18 and asparagine 33. Residues 48–75 (LAIAITALYSAVCAVGLLGNVLVMFGIV) traverse the membrane as a helical segment. The Cytoplasmic segment spans residues 76-85 (RYTKMKTATN). The chain crosses the membrane as a helical span at residues 86 to 110 (IYIFNLALADALATSTLPFQSAKYL). Over 111–122 (METWPFGELLCK) the chain is Extracellular. A disulfide bond links cysteine 121 and cysteine 198. The chain crosses the membrane as a helical span at residues 123–144 (AVLSIDYYNMFTSIFTLTMMSV). The Cytoplasmic segment spans residues 145 to 163 (DRYIAVCHPVKALDFRTPA). Residues 164–186 (KAKLINICIWVLASGVGVPIMVM) form a helical membrane-spanning segment. Residues 187–206 (AVTRPRDGAVVCMLQFPSPS) lie on the Extracellular side of the membrane. The helical transmembrane segment at 207 to 238 (WYWDTVTKICVFLFAFVVPILIITVCYGLMLL) threads the bilayer. Topologically, residues 239–261 (RLRSVRLLSGSKEKDRSLRRITR) are cytoplasmic. The helical transmembrane segment at 262-284 (MVLVVVGAFVVCWAPIHIFVIVW) threads the bilayer. Topologically, residues 285-299 (TLVDIDRRDPLVVAA) are extracellular. Residues 300–321 (LHLCIALGYANSSLNPVLYAFL) traverse the membrane as a helical segment. The Cytoplasmic portion of the chain corresponds to 322-372 (DENFKRCFRQLCRKPCGRPDPSSFSRAREATARERVTACTPSDGPGGGAAA). The S-palmitoyl cysteine moiety is linked to residue cysteine 333. A disordered region spans residues 340 to 372 (PDPSSFSRAREATARERVTACTPSDGPGGGAAA). Residues 347–357 (RAREATARERV) are compositionally biased toward basic and acidic residues.

Belongs to the G-protein coupled receptor 1 family. May form homooligomers. Forms a heterodimer with OPRM1. Interacts with GPRASP1. Interacts with RTP4; the interaction promotes cell surface localization of the OPRD1-OPRM1 heterodimer. Post-translationally, N-glycosylated. Ubiquitinated. A basal ubiquitination seems not to be related to degradation. Ubiquitination is increased upon formation of OPRM1:OPRD1 oligomers leading to proteasomal degradation; the ubiquitination is diminished by RTP4. Detected in oocytes (at protein level). Detected in brain cortex, hypothalamus, hippocampus and olfactory bulb. Detected in oocytes.

The protein resides in the cell membrane. Its function is as follows. G-protein coupled receptor that functions as a receptor for endogenous enkephalins and for a subset of other opioids. Ligand binding causes a conformation change that triggers signaling via guanine nucleotide-binding proteins (G proteins) and modulates the activity of down-stream effectors, such as adenylate cyclase. Signaling leads to the inhibition of adenylate cyclase activity. Inhibits neurotransmitter release by reducing calcium ion currents and increasing potassium ion conductance. Plays a role in the perception of pain and in opiate-mediated analgesia. Plays a role in developing analgesic tolerance to morphine. The protein is Delta-type opioid receptor (OPRD1) of Homo sapiens (Human).